Consider the following 692-residue polypeptide: Ino eighty subunit 1 (692 aa).

A compositionally biased stretch (basic and acidic residues) spans 1–25; the sequence is MGKRVYDPIHDTFQLREDNSDETKA. Positions 1-133 are disordered; that stretch reads MGKRVYDPIH…RHLKKPDGEP (133 aa). A Phosphoserine modification is found at S27. Polar residues predominate over residues 28 to 56; sequence PMQSVKSGSQEEASPSSIQSETETVTTKS. Residues 64-80 show a composition bias toward acidic residues; sequence EIDDKNDDDSTQSEEEN. Positions 97–109 are enriched in polar residues; sequence GASTATGPVTTNT. Residues 340-385 are a coiled coil; it reads SKYVEVESKAQEQDMVDEQNEVKETEAENEKQESKAAYATTLFDIL. The segment covering 465-485 has biased composition (basic and acidic residues); the sequence is FMSKMEEGRKRERTNVTEVKK. A disordered region spans residues 465–550; it reads FMSKMEEGRK…VTPAAPTETE (86 aa). A phosphoserine mark is found at S487, S493, and S504. Residues 493–504 show a composition bias toward acidic residues; sequence SEEDGEGEDDKS. Phosphothreonine is present on T507. Positions 513–528 are enriched in polar residues; the sequence is SLLTPTPILESSSPMT.

As to quaternary structure, component of the chromatin-remodeling INO80 complex, at least composed of ARP4, ARP5, ARP8, RVB1, RVB2, TAF14, NHP10, IES1, IES3, IES4, IES6, ACT1, IES2, IES5 and INO80.

The protein resides in the nucleus. In terms of biological role, probably involved in transcription regulation via its interaction with the INO80 complex, a chromatin-remodeling complex. The protein is Ino eighty subunit 1 (IES1) of Saccharomyces cerevisiae (strain ATCC 204508 / S288c) (Baker's yeast).